Consider the following 295-residue polypeptide: Phosphatidylserine decarboxylase proenzyme (295 aa).

Catalysis depends on charge relay system; for autoendoproteolytic cleavage activity residues D113, H169, and S256. Catalysis depends on S256, which acts as the Schiff-base intermediate with substrate; via pyruvic acid; for decarboxylase activity. S256 carries the pyruvic acid (Ser); by autocatalysis modification.

Belongs to the phosphatidylserine decarboxylase family. PSD-B subfamily. Prokaryotic type II sub-subfamily. Heterodimer of a large membrane-associated beta subunit and a small pyruvoyl-containing alpha subunit. Requires pyruvate as cofactor. In terms of processing, is synthesized initially as an inactive proenzyme. Formation of the active enzyme involves a self-maturation process in which the active site pyruvoyl group is generated from an internal serine residue via an autocatalytic post-translational modification. Two non-identical subunits are generated from the proenzyme in this reaction, and the pyruvate is formed at the N-terminus of the alpha chain, which is derived from the carboxyl end of the proenzyme. The autoendoproteolytic cleavage occurs by a canonical serine protease mechanism, in which the side chain hydroxyl group of the serine supplies its oxygen atom to form the C-terminus of the beta chain, while the remainder of the serine residue undergoes an oxidative deamination to produce ammonia and the pyruvoyl prosthetic group on the alpha chain. During this reaction, the Ser that is part of the protease active site of the proenzyme becomes the pyruvoyl prosthetic group, which constitutes an essential element of the active site of the mature decarboxylase.

The protein localises to the cell membrane. It carries out the reaction a 1,2-diacyl-sn-glycero-3-phospho-L-serine + H(+) = a 1,2-diacyl-sn-glycero-3-phosphoethanolamine + CO2. Its pathway is phospholipid metabolism; phosphatidylethanolamine biosynthesis; phosphatidylethanolamine from CDP-diacylglycerol: step 2/2. Its function is as follows. Catalyzes the formation of phosphatidylethanolamine (PtdEtn) from phosphatidylserine (PtdSer). This Clostridium botulinum (strain ATCC 19397 / Type A) protein is Phosphatidylserine decarboxylase proenzyme.